The chain runs to 801 residues: Phenylalanine--tRNA ligase beta subunit (801 aa).

One can recognise a tRNA-binding domain in the interval 39–153 (AAGLSKIVVG…EDAVPGEEVF (115 aa)). The B5 domain occupies 406-481 (TSDVEVSSTL…RIYGYDRLPT (76 aa)). Residues D459, D465, E468, and E469 each contribute to the Mg(2+) site. One can recognise an FDX-ACB domain in the interval 708–801 (TKFPAVSRDV…LEEKVNAEVR (94 aa)).

The protein belongs to the phenylalanyl-tRNA synthetase beta subunit family. Type 1 subfamily. Tetramer of two alpha and two beta subunits. Mg(2+) is required as a cofactor.

It is found in the cytoplasm. The catalysed reaction is tRNA(Phe) + L-phenylalanine + ATP = L-phenylalanyl-tRNA(Phe) + AMP + diphosphate + H(+). In Streptococcus pneumoniae serotype 4 (strain ATCC BAA-334 / TIGR4), this protein is Phenylalanine--tRNA ligase beta subunit.